A 273-amino-acid chain; its full sequence is Large ribosomal subunit protein uL2 (273 aa).

The interval 228–273 is disordered; that stretch reads VDHPHGGGEGKTSGGRHPVTPWGFPTKGKKTRKNKRTSKFIVKKRK. The segment covering 254–273 has biased composition (basic residues); the sequence is KGKKTRKNKRTSKFIVKKRK.

The protein belongs to the universal ribosomal protein uL2 family. Part of the 50S ribosomal subunit. Forms a bridge to the 30S subunit in the 70S ribosome.

Its function is as follows. One of the primary rRNA binding proteins. Required for association of the 30S and 50S subunits to form the 70S ribosome, for tRNA binding and peptide bond formation. It has been suggested to have peptidyltransferase activity; this is somewhat controversial. Makes several contacts with the 16S rRNA in the 70S ribosome. In Rickettsia rickettsii (strain Iowa), this protein is Large ribosomal subunit protein uL2.